Here is a 214-residue protein sequence, read N- to C-terminus: 3,4-dihydroxy-2-butanone 4-phosphate synthase (214 aa).

Residues 40 to 41, Asp-45, 153 to 157, and Glu-177 contribute to the D-ribulose 5-phosphate site; these read RE and RRGHT. Mg(2+) is bound at residue Glu-41. His-156 contacts Mg(2+).

This sequence belongs to the DHBP synthase family. In terms of assembly, homodimer. Requires Mg(2+) as cofactor. The cofactor is Mn(2+).

The enzyme catalyses D-ribulose 5-phosphate = (2S)-2-hydroxy-3-oxobutyl phosphate + formate + H(+). Its pathway is cofactor biosynthesis; riboflavin biosynthesis; 2-hydroxy-3-oxobutyl phosphate from D-ribulose 5-phosphate: step 1/1. Its function is as follows. Catalyzes the conversion of D-ribulose 5-phosphate to formate and 3,4-dihydroxy-2-butanone 4-phosphate. This Rhodospirillum rubrum (strain ATCC 11170 / ATH 1.1.1 / DSM 467 / LMG 4362 / NCIMB 8255 / S1) protein is 3,4-dihydroxy-2-butanone 4-phosphate synthase.